A 245-amino-acid polypeptide reads, in one-letter code: Octanoyltransferase (245 aa).

A BPL/LPL catalytic domain is found at 54–242 (QNAPEQVWLL…AFEQIFGPTI (189 aa)). Substrate-binding positions include 93–100 (RGGEFTYH), 173–175 (AIG), and 186–188 (GVS). The active-site Acyl-thioester intermediate is the cysteine 204.

The protein belongs to the LipB family.

It localises to the cytoplasm. It catalyses the reaction octanoyl-[ACP] + L-lysyl-[protein] = N(6)-octanoyl-L-lysyl-[protein] + holo-[ACP] + H(+). It functions in the pathway protein modification; protein lipoylation via endogenous pathway; protein N(6)-(lipoyl)lysine from octanoyl-[acyl-carrier-protein]: step 1/2. In terms of biological role, catalyzes the transfer of endogenously produced octanoic acid from octanoyl-acyl-carrier-protein onto the lipoyl domains of lipoate-dependent enzymes. Lipoyl-ACP can also act as a substrate although octanoyl-ACP is likely to be the physiological substrate. The polypeptide is Octanoyltransferase (Bartonella quintana (strain Toulouse) (Rochalimaea quintana)).